The primary structure comprises 577 residues: Adenine deaminase (577 aa).

Belongs to the metallo-dependent hydrolases superfamily. Adenine deaminase family. Mn(2+) is required as a cofactor.

It carries out the reaction adenine + H2O + H(+) = hypoxanthine + NH4(+). In Bacillus subtilis (strain 168), this protein is Adenine deaminase (adeC).